Consider the following 172-residue polypeptide: Small t antigen (172 aa).

Position 1 is an N-acetylmethionine; by host (Met-1). A J domain is found at Glu-12–Gly-75. The C4-type; atypical zinc-finger motif lies at Cys-101 to Cys-114. The H1C3-type; atypical zinc-finger motif lies at His-120–Cys-141.

Interacts with host PPP2R1A; the interaction inhibits PP2A activity.

The protein localises to the host cytoplasm. Its subcellular location is the host nucleus. In terms of biological role, promotes efficient viral genome replication by accelerating both G1 and S phase progression of the cell cycle. Inhibits host PP2A by binding to the A subunit, thereby displacing lower affinity regulatory B subunit. Inactivation of PP2A in turn results in the transactivation of cyclin A and cyclin D1 promoters. Late during the infection cycle, ST may induce dephosphorylation of host MTOR, leading to the inhibition of cap-dependent translation. May establish and maintain high levels of viral genomes during persistent infection in cell culture. This Simian virus 12 (strain wt100) (SV-12) protein is Small t antigen.